The chain runs to 357 residues: Holliday junction branch migration complex subunit RuvB (357 aa).

The tract at residues 4-195 is large ATPase domain (RuvB-L); the sequence is TDKLAAKAVS…FGIVARLEFY (192 aa). ATP contacts are provided by residues L34, R35, G76, K79, T80, T81, 142 to 144, R185, Y195, and R232; that span reads EDY. T80 lines the Mg(2+) pocket. The tract at residues 196–266 is small ATPAse domain (RuvB-S); the sequence is TPTELARIVT…VADAALAMLD (71 aa). A head domain (RuvB-H) region spans residues 269-357; sequence AVGFDLMDRK…PARDLWDNNA (89 aa). R305, R324, and R329 together coordinate DNA.

The protein belongs to the RuvB family. As to quaternary structure, homohexamer. Forms an RuvA(8)-RuvB(12)-Holliday junction (HJ) complex. HJ DNA is sandwiched between 2 RuvA tetramers; dsDNA enters through RuvA and exits via RuvB. An RuvB hexamer assembles on each DNA strand where it exits the tetramer. Each RuvB hexamer is contacted by two RuvA subunits (via domain III) on 2 adjacent RuvB subunits; this complex drives branch migration. In the full resolvosome a probable DNA-RuvA(4)-RuvB(12)-RuvC(2) complex forms which resolves the HJ.

The protein localises to the cytoplasm. The catalysed reaction is ATP + H2O = ADP + phosphate + H(+). Its function is as follows. The RuvA-RuvB-RuvC complex processes Holliday junction (HJ) DNA during genetic recombination and DNA repair, while the RuvA-RuvB complex plays an important role in the rescue of blocked DNA replication forks via replication fork reversal (RFR). RuvA specifically binds to HJ cruciform DNA, conferring on it an open structure. The RuvB hexamer acts as an ATP-dependent pump, pulling dsDNA into and through the RuvAB complex. RuvB forms 2 homohexamers on either side of HJ DNA bound by 1 or 2 RuvA tetramers; 4 subunits per hexamer contact DNA at a time. Coordinated motions by a converter formed by DNA-disengaged RuvB subunits stimulates ATP hydrolysis and nucleotide exchange. Immobilization of the converter enables RuvB to convert the ATP-contained energy into a lever motion, pulling 2 nucleotides of DNA out of the RuvA tetramer per ATP hydrolyzed, thus driving DNA branch migration. The RuvB motors rotate together with the DNA substrate, which together with the progressing nucleotide cycle form the mechanistic basis for DNA recombination by continuous HJ branch migration. Branch migration allows RuvC to scan DNA until it finds its consensus sequence, where it cleaves and resolves cruciform DNA. The protein is Holliday junction branch migration complex subunit RuvB of Ralstonia nicotianae (strain ATCC BAA-1114 / GMI1000) (Ralstonia solanacearum).